Reading from the N-terminus, the 499-residue chain is Cysteine--tRNA ligase (499 aa).

Cysteine 29 serves as a coordination point for Zn(2+). The 'HIGH' region signature appears at 31-41 (VTVYDLCHLGH). The Zn(2+) site is built by cysteine 213, histidine 238, and glutamate 242. The short motif at 270–274 (KMSKS) is the 'KMSKS' region element. Lysine 273 is an ATP binding site.

This sequence belongs to the class-I aminoacyl-tRNA synthetase family. Monomer. Requires Zn(2+) as cofactor.

It localises to the cytoplasm. The catalysed reaction is tRNA(Cys) + L-cysteine + ATP = L-cysteinyl-tRNA(Cys) + AMP + diphosphate. In Prochlorococcus marinus (strain MIT 9303), this protein is Cysteine--tRNA ligase.